Here is a 449-residue protein sequence, read N- to C-terminus: Na(+)/H(+) antiporter NhaA 1 (449 aa).

The next 11 helical transmembrane spans lie at 38 to 58 (GILLALCAVAAMVWANSPWAA), 79 to 99 (FTIREFINDGLMTLFFFVVGM), 117 to 137 (VLPLIAAMGGMIVPAALYAAF), 145 to 165 (AGWAIPMATDIAFSIGCLTLV), 175 to 195 (VFLTALAIFDDIGGILVIALF), 198 to 218 (SGLHVSWLVGALGVLAVLACL), 240 to 260 (MHHGGIHATLSGVVLGLFMPA), 311 to 331 (FVHLWHVPVAYGIVPLFALAN), 347 to 367 (PLPLGIIAGLFVGKQVGIFLF), 390 to 410 (GVAVVAGIGFTVALFVAGLAF), and 422 to 442 (LGILVGSLLSAVVGYALLRFV).

The protein belongs to the NhaA Na(+)/H(+) (TC 2.A.33) antiporter family.

Its subcellular location is the cell inner membrane. It catalyses the reaction Na(+)(in) + 2 H(+)(out) = Na(+)(out) + 2 H(+)(in). Its function is as follows. Na(+)/H(+) antiporter that extrudes sodium in exchange for external protons. This Myxococcus xanthus (strain DK1622) protein is Na(+)/H(+) antiporter NhaA 1.